The following is a 631-amino-acid chain: Phosphomethylpyrimidine synthase (631 aa).

Substrate is bound by residues Asn-239, Met-268, Tyr-297, His-333, 353–355 (SRG), 394–397 (DGLR), and Glu-433. His-437 is a binding site for Zn(2+). Tyr-460 is a binding site for substrate. Position 501 (His-501) interacts with Zn(2+). 3 residues coordinate [4Fe-4S] cluster: Cys-581, Cys-584, and Cys-589.

This sequence belongs to the ThiC family. As to quaternary structure, homodimer. The cofactor is [4Fe-4S] cluster.

The enzyme catalyses 5-amino-1-(5-phospho-beta-D-ribosyl)imidazole + S-adenosyl-L-methionine = 4-amino-2-methyl-5-(phosphooxymethyl)pyrimidine + CO + 5'-deoxyadenosine + formate + L-methionine + 3 H(+). Its pathway is cofactor biosynthesis; thiamine diphosphate biosynthesis. In terms of biological role, catalyzes the synthesis of the hydroxymethylpyrimidine phosphate (HMP-P) moiety of thiamine from aminoimidazole ribotide (AIR) in a radical S-adenosyl-L-methionine (SAM)-dependent reaction. The sequence is that of Phosphomethylpyrimidine synthase from Escherichia coli O8 (strain IAI1).